A 277-amino-acid polypeptide reads, in one-letter code: Undecaprenyl-diphosphatase (277 aa).

The next 6 membrane-spanning stretches (helical) occupy residues 88 to 108, 117 to 137, 157 to 179, 191 to 211, 227 to 247, and 255 to 275; these read MGWL…LFQD, MWIV…ADAV, FAQA…AGLL, SFLL…YKTV, LATV…LKFV, and FVWY…FNVI.

This sequence belongs to the UppP family.

The protein resides in the cell membrane. It carries out the reaction di-trans,octa-cis-undecaprenyl diphosphate + H2O = di-trans,octa-cis-undecaprenyl phosphate + phosphate + H(+). Functionally, catalyzes the dephosphorylation of undecaprenyl diphosphate (UPP). Confers resistance to bacitracin. This chain is Undecaprenyl-diphosphatase, found in Paenarthrobacter aurescens (strain TC1).